The primary structure comprises 735 residues: Phosphoribosylformylglycinamidine synthase subunit PurL (735 aa).

The active site involves His50. ATP is bound by residues Tyr53 and Lys92. Residue Glu94 participates in Mg(2+) binding. Substrate-binding positions include 95–98 and Arg117; that span reads SHNH. His96 (proton acceptor) is an active-site residue. Asp118 serves as a coordination point for Mg(2+). Position 241 (Gln241) interacts with substrate. Asp269 contributes to the Mg(2+) binding site. 313–315 serves as a coordination point for substrate; it reads ESQ. Asp495 and Gly532 together coordinate ATP. Asn533 contributes to the Mg(2+) binding site. Ser535 serves as a coordination point for substrate.

This sequence belongs to the FGAMS family. Monomer. Part of the FGAM synthase complex composed of 1 PurL, 1 PurQ and 2 PurS subunits.

It is found in the cytoplasm. It carries out the reaction N(2)-formyl-N(1)-(5-phospho-beta-D-ribosyl)glycinamide + L-glutamine + ATP + H2O = 2-formamido-N(1)-(5-O-phospho-beta-D-ribosyl)acetamidine + L-glutamate + ADP + phosphate + H(+). The protein operates within purine metabolism; IMP biosynthesis via de novo pathway; 5-amino-1-(5-phospho-D-ribosyl)imidazole from N(2)-formyl-N(1)-(5-phospho-D-ribosyl)glycinamide: step 1/2. Part of the phosphoribosylformylglycinamidine synthase complex involved in the purines biosynthetic pathway. Catalyzes the ATP-dependent conversion of formylglycinamide ribonucleotide (FGAR) and glutamine to yield formylglycinamidine ribonucleotide (FGAM) and glutamate. The FGAM synthase complex is composed of three subunits. PurQ produces an ammonia molecule by converting glutamine to glutamate. PurL transfers the ammonia molecule to FGAR to form FGAM in an ATP-dependent manner. PurS interacts with PurQ and PurL and is thought to assist in the transfer of the ammonia molecule from PurQ to PurL. This is Phosphoribosylformylglycinamidine synthase subunit PurL from Bartonella henselae (strain ATCC 49882 / DSM 28221 / CCUG 30454 / Houston 1) (Rochalimaea henselae).